Reading from the N-terminus, the 59-residue chain is UPF0391 membrane protein AZC_4184 (59 aa).

Helical transmembrane passes span Trp-4–Ala-24 and Ile-30–Phe-50.

Belongs to the UPF0391 family.

The protein resides in the cell membrane. This Azorhizobium caulinodans (strain ATCC 43989 / DSM 5975 / JCM 20966 / LMG 6465 / NBRC 14845 / NCIMB 13405 / ORS 571) protein is UPF0391 membrane protein AZC_4184.